The primary structure comprises 175 residues: dATP triphosphohydrolase (175 aa).

DATP is bound at residue Arg19. Residues His34, His66, Asp67, Glu70, Asp75, and Asp119 each coordinate Co(2+).

The protein belongs to the Caudovirales dATP triphosphohydrolase family. As to quaternary structure, homohexamer. Co(2+) is required as a cofactor. The cofactor is Zn(2+).

The enzyme catalyses dATP + H2O = 2'-deoxyadenosine + triphosphate + H(+). The catalysed reaction is dADP + H2O = 2'-deoxyadenosine + diphosphate. It catalyses the reaction dAMP + H2O = 2'-deoxyadenosine + phosphate. Catalyzes the hydrolysis of dATP, dADP and dAMP into dA. This step is essential for Z-genome synthesis (containing aminoadenine instead of adenine). Specifically removes dATP and its precursor dADP from the nucleotide pool of the host, preventing the incorporation of A into the phage genome and favoring the integration of the Z-base into the viral genome. The chain is dATP triphosphohydrolase (datZ) from Cyanophage S-2L (Cyanobacteria phage S-2L).